The primary structure comprises 263 residues: 3-deoxy-manno-octulosonate cytidylyltransferase (263 aa).

It belongs to the KdsB family.

It localises to the cytoplasm. The enzyme catalyses 3-deoxy-alpha-D-manno-oct-2-ulosonate + CTP = CMP-3-deoxy-beta-D-manno-octulosonate + diphosphate. Its pathway is nucleotide-sugar biosynthesis; CMP-3-deoxy-D-manno-octulosonate biosynthesis; CMP-3-deoxy-D-manno-octulosonate from 3-deoxy-D-manno-octulosonate and CTP: step 1/1. The protein operates within bacterial outer membrane biogenesis; lipopolysaccharide biosynthesis. Activates KDO (a required 8-carbon sugar) for incorporation into bacterial lipopolysaccharide in Gram-negative bacteria. The chain is 3-deoxy-manno-octulosonate cytidylyltransferase from Burkholderia vietnamiensis (strain G4 / LMG 22486) (Burkholderia cepacia (strain R1808)).